The sequence spans 218 residues: Small ribosomal subunit protein uS3c (218 aa).

One can recognise a KH type-2 domain in the interval 47-118 (VRKHIKSSSN…KLRMALTEVE (72 aa)).

This sequence belongs to the universal ribosomal protein uS3 family. In terms of assembly, part of the 30S ribosomal subunit.

The protein resides in the plastid. Its subcellular location is the chloroplast. This is Small ribosomal subunit protein uS3c (rps3) from Anthoceros angustus (Hornwort).